The following is a 380-amino-acid chain: uncharacterized protein (380 aa).

This is an uncharacterized protein from Methanocaldococcus jannaschii (strain ATCC 43067 / DSM 2661 / JAL-1 / JCM 10045 / NBRC 100440) (Methanococcus jannaschii).